The chain runs to 138 residues: ATP synthase epsilon chain (138 aa).

This sequence belongs to the ATPase epsilon chain family. In terms of assembly, F-type ATPases have 2 components, CF(1) - the catalytic core - and CF(0) - the membrane proton channel. CF(1) has five subunits: alpha(3), beta(3), gamma(1), delta(1), epsilon(1). CF(0) has three main subunits: a, b and c.

Its subcellular location is the cell inner membrane. Produces ATP from ADP in the presence of a proton gradient across the membrane. The chain is ATP synthase epsilon chain from Idiomarina loihiensis (strain ATCC BAA-735 / DSM 15497 / L2-TR).